An 89-amino-acid polypeptide reads, in one-letter code: Small ribosomal subunit protein uS15 (89 aa).

Belongs to the universal ribosomal protein uS15 family. As to quaternary structure, part of the 30S ribosomal subunit. Forms a bridge to the 50S subunit in the 70S ribosome, contacting the 23S rRNA.

Its function is as follows. One of the primary rRNA binding proteins, it binds directly to 16S rRNA where it helps nucleate assembly of the platform of the 30S subunit by binding and bridging several RNA helices of the 16S rRNA. Functionally, forms an intersubunit bridge (bridge B4) with the 23S rRNA of the 50S subunit in the ribosome. This is Small ribosomal subunit protein uS15 from Halalkalibacterium halodurans (strain ATCC BAA-125 / DSM 18197 / FERM 7344 / JCM 9153 / C-125) (Bacillus halodurans).